Reading from the N-terminus, the 2422-residue chain is Interferon-induced very large GTPase 1 (2422 aa).

Residues 945-965 (ENFFEDSDSPTKSSSTEPSPH) are disordered. Residues 954–963 (PTKSSSTEPS) are compositionally biased toward low complexity. The VLIG-type G domain occupies 1479–1720 (DKRLFVLSIL…KISDVKSRVQ (242 aa)). GTP-binding positions include 1489–1496 (GLQSSGKS), 1542–1545 (DTEG), and 1619–1622 (TATD).

Belongs to the TRAFAC class dynamin-like GTPase superfamily. Very large inducible GTPase (VLIG) family.

It is found in the cytoplasm. The protein resides in the cytosol. It localises to the nucleus. This Homo sapiens (Human) protein is Interferon-induced very large GTPase 1 (GVINP1).